Consider the following 120-residue polypeptide: Large ribosomal subunit protein uL18 (120 aa).

Belongs to the universal ribosomal protein uL18 family. In terms of assembly, part of the 50S ribosomal subunit; part of the 5S rRNA/L5/L18/L25 subcomplex. Contacts the 5S and 23S rRNAs.

In terms of biological role, this is one of the proteins that bind and probably mediate the attachment of the 5S RNA into the large ribosomal subunit, where it forms part of the central protuberance. The sequence is that of Large ribosomal subunit protein uL18 from Hyphomonas neptunium (strain ATCC 15444).